The sequence spans 970 residues: Rho GTPase-activating protein gacK (970 aa).

Positions 1–20 (MTLVYEKSSFVLIMAQIAEA) are cleaved as a signal peptide. Disordered stretches follow at residues 30 to 49 (SNDLLSTSAGSPPSPTSAAI), 258 to 285 (STCSLSSNASNNYPQSPPKYNNFEINQN), 312 to 446 (EITI…FSPT), 487 to 550 (STSN…NNNN), and 860 to 886 (TASSAATANSSSSGSGNGNSSPNNDDP). Low complexity-rich tracts occupy residues 35-49 (STSAGSPPSPTSAAI) and 258-269 (STCSLSSNASNN). Over residues 321–333 (IPLPPQSSSPPPT) the composition is skewed to pro residues. The span at 334–383 (RNNQSSPSPSSPQQQNIMPTPPSTSLTPPQSPTLSPSSSTHSTPTQTTTT) shows a compositional bias: low complexity. Residues 392–406 (PSTISQNNARKTQIP) are compositionally biased toward polar residues. The segment covering 407 to 426 (TTTTTTTTTTTTTSTTSTTS) has biased composition (low complexity). A compositionally biased stretch (polar residues) spans 427 to 446 (PNPVVNNKNLNTPSSSFSPT). The 217-residue stretch at 754–970 (IEDSELVEDN…LELIQFNKSL (217 aa)) folds into the Rho-GAP domain. Positions 860–885 (TASSAATANSSSSGSGNGNSSPNNDD) are enriched in low complexity.

It is found in the cytoplasm. Rho GTPase-activating protein involved in the signal transduction pathway. The protein is Rho GTPase-activating protein gacK (gacK) of Dictyostelium discoideum (Social amoeba).